The chain runs to 249 residues: 5'-nucleotidase SurE (249 aa).

Residues Asp8, Asp9, Ser39, and Asn91 each coordinate a divalent metal cation.

This sequence belongs to the SurE nucleotidase family. A divalent metal cation is required as a cofactor.

Its subcellular location is the cytoplasm. It carries out the reaction a ribonucleoside 5'-phosphate + H2O = a ribonucleoside + phosphate. Functionally, nucleotidase that shows phosphatase activity on nucleoside 5'-monophosphates. This is 5'-nucleotidase SurE from Pseudomonas putida (strain ATCC 47054 / DSM 6125 / CFBP 8728 / NCIMB 11950 / KT2440).